The primary structure comprises 345 residues: N-acetyl-gamma-glutamyl-phosphate reductase (345 aa).

The active site involves Cys149.

The protein belongs to the NAGSA dehydrogenase family. Type 1 subfamily.

It localises to the cytoplasm. It catalyses the reaction N-acetyl-L-glutamate 5-semialdehyde + phosphate + NADP(+) = N-acetyl-L-glutamyl 5-phosphate + NADPH + H(+). It functions in the pathway amino-acid biosynthesis; L-arginine biosynthesis; N(2)-acetyl-L-ornithine from L-glutamate: step 3/4. Functionally, catalyzes the NADPH-dependent reduction of N-acetyl-5-glutamyl phosphate to yield N-acetyl-L-glutamate 5-semialdehyde. The polypeptide is N-acetyl-gamma-glutamyl-phosphate reductase (Desulforapulum autotrophicum (strain ATCC 43914 / DSM 3382 / VKM B-1955 / HRM2) (Desulfobacterium autotrophicum)).